The sequence spans 248 residues: MNVVVDTHTHTLASGHAYSTIIENARSAQNKGLKLLCTTDHAPEMPGAPHYWYFNNQRILPRFLHQVGILRGVEANILNVKGEIDLPSSSDQHLDWVIASFHEPVFAPASEAEHTAALLNVIKSGRIDVLGHSGNPNYPFDIERVLQCAKEHNVAIEVNNTSLTGKSRKGSDVRCDKIVEIGKEVGVYFTTGSDAHFCEEIARLELAIALLEKYEISEDKIITTSTSRFLNFLLLRGKPIIPEFDSLY.

Positions 8, 10, 16, 41, 74, 102, 132, 194, and 196 each coordinate Zn(2+).

Belongs to the PHP family. Requires Zn(2+) as cofactor.

The protein is Probable phosphatase VF_A0065 of Aliivibrio fischeri (strain ATCC 700601 / ES114) (Vibrio fischeri).